The primary structure comprises 194 residues: Imidazoleglycerol-phosphate dehydratase (194 aa).

Belongs to the imidazoleglycerol-phosphate dehydratase family.

The protein localises to the cytoplasm. The catalysed reaction is D-erythro-1-(imidazol-4-yl)glycerol 3-phosphate = 3-(imidazol-4-yl)-2-oxopropyl phosphate + H2O. The protein operates within amino-acid biosynthesis; L-histidine biosynthesis; L-histidine from 5-phospho-alpha-D-ribose 1-diphosphate: step 6/9. The protein is Imidazoleglycerol-phosphate dehydratase of Caldanaerobacter subterraneus subsp. tengcongensis (strain DSM 15242 / JCM 11007 / NBRC 100824 / MB4) (Thermoanaerobacter tengcongensis).